Consider the following 397-residue polypeptide: 1-deoxy-D-xylulose 5-phosphate reductoisomerase (397 aa).

6 residues coordinate NADPH: threonine 10, glycine 11, serine 12, isoleucine 13, asparagine 39, and asparagine 125. Lysine 126 contributes to the 1-deoxy-D-xylulose 5-phosphate binding site. Residue glutamate 127 participates in NADPH binding. Aspartate 151 serves as a coordination point for Mn(2+). The 1-deoxy-D-xylulose 5-phosphate site is built by serine 152, glutamate 153, serine 187, and histidine 210. Glutamate 153 is a binding site for Mn(2+). Glycine 216 contributes to the NADPH binding site. 4 residues coordinate 1-deoxy-D-xylulose 5-phosphate: serine 223, asparagine 228, lysine 229, and glutamate 232. Position 232 (glutamate 232) interacts with Mn(2+).

It belongs to the DXR family. As to quaternary structure, homodimer. Mg(2+) serves as cofactor. The cofactor is Mn(2+).

The catalysed reaction is 2-C-methyl-D-erythritol 4-phosphate + NADP(+) = 1-deoxy-D-xylulose 5-phosphate + NADPH + H(+). It participates in isoprenoid biosynthesis; isopentenyl diphosphate biosynthesis via DXP pathway; isopentenyl diphosphate from 1-deoxy-D-xylulose 5-phosphate: step 1/6. Catalyzes the NADPH-dependent rearrangement and reduction of 1-deoxy-D-xylulose-5-phosphate (DXP) to 2-C-methyl-D-erythritol 4-phosphate (MEP). The polypeptide is 1-deoxy-D-xylulose 5-phosphate reductoisomerase (Wigglesworthia glossinidia brevipalpis).